A 315-amino-acid chain; its full sequence is DNA-directed RNA polymerase subunit alpha (315 aa).

The interval 1–228 (MLEIEKPKIE…EHLRLFIGLT (228 aa)) is alpha N-terminal domain (alpha-NTD). Residues 246-315 (DKILEMTIEE…LGLSLRQEDE (70 aa)) are alpha C-terminal domain (alpha-CTD).

This sequence belongs to the RNA polymerase alpha chain family. As to quaternary structure, homodimer. The RNAP catalytic core consists of 2 alpha, 1 beta, 1 beta' and 1 omega subunit. When a sigma factor is associated with the core the holoenzyme is formed, which can initiate transcription.

The enzyme catalyses RNA(n) + a ribonucleoside 5'-triphosphate = RNA(n+1) + diphosphate. Functionally, DNA-dependent RNA polymerase catalyzes the transcription of DNA into RNA using the four ribonucleoside triphosphates as substrates. In Desulforamulus reducens (strain ATCC BAA-1160 / DSM 100696 / MI-1) (Desulfotomaculum reducens), this protein is DNA-directed RNA polymerase subunit alpha.